The sequence spans 507 residues: ATP synthase subunit alpha, chloroplastic (507 aa).

170–177 contacts ATP; that stretch reads GDRQTGKT.

The protein belongs to the ATPase alpha/beta chains family. As to quaternary structure, F-type ATPases have 2 components, CF(1) - the catalytic core - and CF(0) - the membrane proton channel. CF(1) has five subunits: alpha(3), beta(3), gamma(1), delta(1), epsilon(1). CF(0) has four main subunits: a, b, b' and c.

The protein resides in the plastid. Its subcellular location is the chloroplast thylakoid membrane. The catalysed reaction is ATP + H2O + 4 H(+)(in) = ADP + phosphate + 5 H(+)(out). Produces ATP from ADP in the presence of a proton gradient across the membrane. The alpha chain is a regulatory subunit. The sequence is that of ATP synthase subunit alpha, chloroplastic from Vitis vinifera (Grape).